The chain runs to 279 residues: Fatty acid desaturase 4-like 2, chloroplastic (279 aa).

The transit peptide at 1-30 (MATSLQTKYTLNPITNNIPRSHRPSFLRVT) directs the protein to the chloroplast. 3 consecutive transmembrane segments (helical) span residues 68–90 (LWVAAGCTTVFVSFSKSIIGAFG), 98–118 (SLAGFAGYILADLGSGVYHWA), and 178–198 (VVHGFVSMFAFCVLFCQLFHA).

It belongs to the fatty acid desaturase CarF family.

It localises to the plastid. The protein resides in the chloroplast membrane. The protein operates within lipid metabolism; fatty acid metabolism. Fatty acid desaturase involved in the production of chloroplast-specific phosphatidylglycerol molecular species. Catalyzes the formation of a trans double bond introduced close to the carboxyl group of palmitic acid, which is specifically esterified to the sn-2 glyceryl carbon of phosphatidylglycerol. The polypeptide is Fatty acid desaturase 4-like 2, chloroplastic (FAD4L2) (Arabidopsis thaliana (Mouse-ear cress)).